We begin with the raw amino-acid sequence, 278 residues long: Rhomboid protease GlpG (278 aa).

Transmembrane regions (helical) follow at residues 95–115 (GPLT…MQIV), 143–163 (AFLH…WYLA), 170–190 (LGTG…GWGQ), 192–212 (LFSG…MGYV), 224–241 (ISLP…LVAG), and 245–267 (ILGL…LMAF). Serine 202 serves as the catalytic Nucleophile. Histidine 255 is a catalytic residue.

The protein belongs to the peptidase S54 family.

Its subcellular location is the cell inner membrane. It catalyses the reaction Cleaves type-1 transmembrane domains using a catalytic dyad composed of serine and histidine that are contributed by different transmembrane domains.. In terms of biological role, rhomboid-type serine protease that catalyzes intramembrane proteolysis. This chain is Rhomboid protease GlpG, found in Yersinia enterocolitica serotype O:8 / biotype 1B (strain NCTC 13174 / 8081).